The primary structure comprises 68 residues: Non-specific lipid-transfer protein 2 (68 aa).

This sequence belongs to the plant LTP family.

Plant non-specific lipid-transfer proteins transfer phospholipids as well as galactolipids across membranes. May play a role in wax or cutin deposition in the cell walls of expanding epidermal cells and certain secretory tissues. This chain is Non-specific lipid-transfer protein 2, found in Prunus armeniaca (Apricot).